The primary structure comprises 429 residues: Adenylosuccinate synthetase (429 aa).

GTP contacts are provided by residues 13–19 and 41–43; these read GDEGKGK and GHT. Aspartate 14 acts as the Proton acceptor in catalysis. Residues aspartate 14 and glycine 41 each coordinate Mg(2+). Residues 14 to 17, 39 to 42, threonine 130, arginine 144, glutamine 225, threonine 240, and arginine 304 each bind IMP; these read DEGK and NAGH. The Proton donor role is filled by histidine 42. Substrate is bound at residue 300-306; it reads ATTGRAR. GTP contacts are provided by residues arginine 306, 332 to 334, and 413 to 415; these read KLD and STG.

It belongs to the adenylosuccinate synthetase family. As to quaternary structure, homodimer. It depends on Mg(2+) as a cofactor.

It is found in the cytoplasm. It carries out the reaction IMP + L-aspartate + GTP = N(6)-(1,2-dicarboxyethyl)-AMP + GDP + phosphate + 2 H(+). It participates in purine metabolism; AMP biosynthesis via de novo pathway; AMP from IMP: step 1/2. Plays an important role in the de novo pathway of purine nucleotide biosynthesis. Catalyzes the first committed step in the biosynthesis of AMP from IMP. The polypeptide is Adenylosuccinate synthetase (Pseudomonas fluorescens (strain Pf0-1)).